The primary structure comprises 420 residues: Disease resistance protein CHS1 (420 aa).

Residues 12–167 (RELDVFLSFS…QIADDIRLMF (156 aa)) form the TIR domain. The active site involves E86. The NB-ARC domain maps to 185-406 (MKALYALLAL…KDIKEVWKIM (222 aa)).

In terms of tissue distribution, mostly expressed in leaves and flowers (mainly in sepals), and, at a lower intensity, in stems. Present at low levels in roots and seeds.

It localises to the cytoplasm. Its subcellular location is the nucleus. The catalysed reaction is NAD(+) + H2O = ADP-D-ribose + nicotinamide + H(+). Confers resistance to low temperatures by limiting chloroplast damage and cell death, thus maintaining growth homeostasis. Regulates steryl-esters and sterols accumulation. Limits leaf necrosis associated with virulent bacterial infection (e.g. Pseudomonas syringae pv. tomato DC3000). The polypeptide is Disease resistance protein CHS1 (Arabidopsis thaliana (Mouse-ear cress)).